Here is a 361-residue protein sequence, read N- to C-terminus: Free fatty acid receptor 4 (361 aa).

Residues 1 to 45 (MSPECARAAGDAPLRSLEQANRTRFSFFSDVKGDHRLLLAAVETT) lie on the Extracellular side of the membrane. Asn-21 carries an N-linked (GlcNAc...) asparagine glycan. Residues 46 to 66 (VLALIFAVSLLGNVCALVLVA) form a helical membrane-spanning segment. Residues 67–77 (RRRRRGTTACL) lie on the Cytoplasmic side of the membrane. A helical transmembrane segment spans residues 78-98 (VLNLFCADLLFISAIPLVLAV). Residues 99–112 (RWTEAWLLGPVACH) lie on the Extracellular side of the membrane. Cysteines 111 and 194 form a disulfide. The chain crosses the membrane as a helical span at residues 113-133 (LLFYLMTLSGSVTILTLAAVS). The Cytoplasmic segment spans residues 134-156 (LERMVCIVHLQRGVRGPGRRARA). Residues 157-177 (VLLTLIWGYSAVAALPLCVFF) traverse the membrane as a helical segment. Topologically, residues 178–204 (RVVPQRLPGADQEISICTLIWPTIAGE) are extracellular. The chain crosses the membrane as a helical span at residues 205–225 (ISWDVSFVTLNFLVPGLVIVI). The Cytoplasmic portion of the chain corresponds to 226-268 (SYSKILQITKASRKRLTVSLAYSESHQIRVSQQDFRLFRTLFL). Residues 269–289 (LMVSFFIMWSPIIITILLILI) form a helical membrane-spanning segment. Residues 290–295 (QNFKQD) are Extracellular-facing. Residues 296–316 (LVIWPSLFFWVVAFTFANSAL) traverse the membrane as a helical segment. At 317–361 (NPILYNMTLCRNEWKKIFCCFWFPEKGAILTDTSVKRNDLSVISG) the chain is on the cytoplasmic side. A phosphothreonine mark is found at Thr-347 and Thr-349. Ser-350, Ser-357, and Ser-360 each carry phosphoserine.

Belongs to the G-protein coupled receptor 1 family. Interacts (via C-terminus) with ARRB2 following LCFAs stimulation. In terms of processing, phosphorylated at two clusters of Ser and Thr residues located in the intracellular C-terminus. Prerequisite for FFAR4 internalization via an ARRB2-dependent pathway. In terms of tissue distribution, highly expressed in lung and colon.

The protein localises to the cell membrane. The protein resides in the endosome membrane. It localises to the lysosome membrane. It is found in the cell projection. Its subcellular location is the cilium membrane. G-protein-coupled receptor for long-chain fatty acids (LCFAs) with a major role in adipogenesis, energy metabolism and inflammation. Signals via G-protein and beta-arrestin pathways. LCFAs sensing initiates activation of phosphoinositidase C-linked G proteins GNAQ and GNA11 (G(q)/G(11)), inducing a variety of cellular responses via second messenger pathways such as intracellular calcium mobilization, modulation of cyclic adenosine monophosphate (cAMP) production, and mitogen-activated protein kinases (MAPKs). After LCFAs binding, associates with beta-arrestin ARRB2 that acts as an adapter protein coupling the receptor to specific downstream signaling pathways, as well as mediating receptor endocytosis. In response to dietary fats, plays an important role in the regulation of adipocyte proliferation and differentiation. Acts as a receptor for omega-3 polyunsaturated fatty acids (PUFAs) at primary cilium of perivascular preadipocytes, initiating an adipogenic program via cAMP and CTCF-dependent chromatin remodeling that ultimately results in transcriptional activation of adipogenic genes and cell cycle entry. Induces differentiation of brown and beige adipocytes probably via autocrine and endocrine functions of FGF21 hormone. Contributes to the thermogenic activation of brown adipose tissue and the browning of white adipose tissue. Activates brown adipocytes by initiating intracellular calcium signaling leading to mitochondrial depolarization and fission, and overall increased mitochondrial respiration. Consequently stimulates fatty acid uptake and oxidation in mitochondria together with UCP1-mediated thermogenic respiration, eventually reducing fat mass. Regulates bi-potential differentiation of bone marrow mesenchymal stem cells toward osteoblasts or adipocytes likely by up-regulating distinct integrins. In response to dietary fats regulates hormone secretion and appetite. Stimulates GIP and GLP1 secretion from enteroendocrine cells as well as GCG secretion in pancreatic alpha cells, thereby playing a role in the regulation of blood glucose levels. Negatively regulates glucose-induced SST secretion in pancreatic delta cells. Mediates LCFAs inhibition of GHRL secretion, an appetite-controlling hormone. In taste buds, contributes to sensing of dietary fatty acids by the gustatory system. During the inflammatory response, promotes anti-inflammatory M2 macrophage differentiation in adipose tissue. Mediates the anti-inflammatory effects of omega-3 PUFAs via inhibition of NLRP3 inflammasome activation. In this pathway, interacts with adapter protein ARRB2 and inhibits the priming step triggered by Toll-like receptors (TLRs) at the level of TAK1 and TAB1. Further inhibits the activation step when ARRB2 directly associates with NLRP3, leading to inhibition of pro-inflammatory cytokine release. Mediates LCFAs anti-apoptotic effects. This Macaca fascicularis (Crab-eating macaque) protein is Free fatty acid receptor 4 (FFAR4).